The primary structure comprises 415 residues: Proline-serine-threonine phosphatase-interacting protein 1 (415 aa).

The 260-residue stretch at 5–264 folds into the F-BAR domain; the sequence is LQFRDAFWCR…TLEGCDVEGD (260 aa). Coiled-coil stretches lie at residues 94–133 and 162–215; these read LALA…KLSL and SANG…TCEA. The residue at position 318 (Ser-318) is a Phosphoserine. A Phosphotyrosine; by ABL1 modification is found at Tyr-344. The 58-residue stretch at 358-415 folds into the SH3 domain; sequence SSAQDYRALYDYTAQNSDELDISAGDILAVILEGEDGWWTVERNGQRGFVPGSYLEKL.

In terms of assembly, homodimer. Homotrimer. Interacts (via coiled-coil domain) with CD2AP, PTPN12 and PTPN18. Interacts (via SH3 domain) with ABL1 and WAS. Interacts (via SH3 and coiled-coil domains) with MEFV (via B-box zinc finger); the interaction allows binding of MEFV to PYCARD and facilitates formation of PYCARD pyroptosomes. Interacts with DNM2 and FASLG. Interacts with CD2. Dephosphorylated on Tyr-344 by PTPN18, this event negatively regulates the association of PSTPIP1 with SH2 domain-containing proteins as tyrosine kinase. Phosphorylation of Tyr-344 is probably required for subsequent phosphorylation at other tyrosine residues. Phosphorylation is induced by activation of the EGFR and PDGFR in a ABL1 dependent manner. The phosphorylation regulates the interaction with WAS and with MEFV. In terms of tissue distribution, highly expressed in adult lung and spleen, and weakly expressed in testis, muscle, kidney, brain and heart. Highly expressed in spleen and thymus, moderately in lung, brain and muscle, and weakly expressed in heart and liver (at protein level).

The protein localises to the cytoplasm. It localises to the perinuclear region. It is found in the cell projection. The protein resides in the lamellipodium. Its subcellular location is the cleavage furrow. The protein localises to the cytoskeleton. It localises to the cell membrane. It is found in the uropodium. Functionally, involved in regulation of the actin cytoskeleton. May regulate WAS actin-bundling activity. Bridges the interaction between ABL1 and PTPN18 leading to ABL1 dephosphorylation. May play a role as a scaffold protein between PTPN12 and WAS and allow PTPN12 to dephosphorylate WAS. Has the potential to physically couple CD2 and CD2AP to WAS. Acts downstream of CD2 and CD2AP to recruit WAS to the T-cell:APC contact site so as to promote the actin polymerization required for synapse induction during T-cell activation. Down-regulates CD2-stimulated adhesion through the coupling of PTPN12 to CD2. Also has a role in innate immunity and the inflammatory response. Recruited to inflammasomes by MEFV. Induces formation of pyroptosomes, large supramolecular structures composed of oligomerized PYCARD dimers which form prior to inflammatory apoptosis. Binding to MEFV allows MEFV to bind to PYCARD and facilitates pyroptosome formation. Regulates endocytosis and cell migration in neutrophils. This Mus musculus (Mouse) protein is Proline-serine-threonine phosphatase-interacting protein 1 (Pstpip1).